The sequence spans 471 residues: Sulfate adenylyltransferase subunit 1 (471 aa).

In terms of domain architecture, tr-type G spans 22–239; sequence KDMLRFLTCG…NIEIGEDDNL (218 aa). The interval 31–38 is G1; the sequence is GSVDDGKS. 31–38 is a GTP binding site; sequence GSVDDGKS. The interval 89–93 is G2; that stretch reads GITID. The G3 stretch occupies residues 110-113; that stretch reads DTPG. GTP is bound by residues 110-114 and 165-168; these read DTPGH and NKMD. The G4 stretch occupies residues 165 to 168; the sequence is NKMD. The segment at 202–204 is G5; sequence SAL.

The protein belongs to the TRAFAC class translation factor GTPase superfamily. Classic translation factor GTPase family. CysN/NodQ subfamily. In terms of assembly, heterodimer composed of CysD, the smaller subunit, and CysN.

The enzyme catalyses sulfate + ATP + H(+) = adenosine 5'-phosphosulfate + diphosphate. It functions in the pathway sulfur metabolism; hydrogen sulfide biosynthesis; sulfite from sulfate: step 1/3. In terms of biological role, with CysD forms the ATP sulfurylase (ATPS) that catalyzes the adenylation of sulfate producing adenosine 5'-phosphosulfate (APS) and diphosphate, the first enzymatic step in sulfur assimilation pathway. APS synthesis involves the formation of a high-energy phosphoric-sulfuric acid anhydride bond driven by GTP hydrolysis by CysN coupled to ATP hydrolysis by CysD. This is Sulfate adenylyltransferase subunit 1 from Alteromonas mediterranea (strain DSM 17117 / CIP 110805 / LMG 28347 / Deep ecotype).